Consider the following 386-residue polypeptide: MIISAASDYRAAAEARLPPFLFHYIDGGAYAEHTLRRNVSDLADIALRQRVLRNMSDLSLSTELFGETLAMPVALAPVGLTGMYARRGEVQAARAAAARGIPFTLSTVSVCPIEEVAPAIDRPMWFQLYVLKDRGFMRNALERAKTAGVTTLVFTVDMPTPGARYRDAHSGMSGPNASLRRMLQAMTHPRWAWDVGLLGKPHDLGNISTYRGSPTGLQDYIGWLAANFDPSISWKDLEWIREFWTGPMVIKGILDPEDARDAVRFGADGIVVSNHGGRQLDGVLSSARALPAIADAVKGELKILADSGIRSGLDVVRMLALGADAVLLGRAFVYALAAGGQAGVENLLTLIEREMRVAMILTGTHSVAEISGDALSRVTREAAVVP.

Positions 1–380 (MIISAASDYR…SGDALSRVTR (380 aa)) constitute an FMN hydroxy acid dehydrogenase domain. Tyrosine 24 serves as a coordination point for substrate. Residues serine 106 and glutamine 127 each coordinate FMN. Tyrosine 129 provides a ligand contact to substrate. Threonine 155 provides a ligand contact to FMN. Arginine 164 contributes to the substrate binding site. An FMN-binding site is contributed by lysine 251. Histidine 275 serves as the catalytic Proton acceptor. Arginine 278 serves as a coordination point for substrate. FMN is bound at residue 306–330 (DSGIRSGLDVVRMLALGADAVLLGR).

It belongs to the FMN-dependent alpha-hydroxy acid dehydrogenase family. Requires FMN as cofactor.

It is found in the cell inner membrane. It carries out the reaction (S)-lactate + A = pyruvate + AH2. Functionally, catalyzes the conversion of L-lactate to pyruvate. Is coupled to the respiratory chain. This chain is L-lactate dehydrogenase, found in Xanthomonas campestris pv. campestris (strain 8004).